The sequence spans 229 residues: B-cell antigen receptor complex-associated protein beta chain (229 aa).

The first 28 residues, 1 to 28, serve as a signal peptide directing secretion; sequence MARLALSPVPSHWMVALLLLLSAEPVPA. Topologically, residues 29-159 are extracellular; it reads ARSEDRYRNP…QLKQRNTLKD (131 aa). The Ig-like V-type domain occupies 38–138; the sequence is PKGSACSRIW…TSEVYQGCGT (101 aa). Intrachain disulfides connect C43-C126 and C65-C122. Residues N73, N101, N127, and N128 are each glycosylated (N-linked (GlcNAc...) asparagine). The chain crosses the membrane as a helical span at residues 160-180; that stretch reads GIIMIQTLLIILFIIVPIFLL. Topologically, residues 181 to 229 are cytoplasmic; the sequence is LDKDDSKAGMEEDHTYEGLDIDQTATYEDIVTLRTGEVKWSVGEHPGQE. The ITAM domain occupies 185-213; that stretch reads DSKAGMEEDHTYEGLDIDQTATYEDIVTL. Phosphotyrosine; by SRC-type Tyr-kinases occurs at positions 196 and 207.

As to quaternary structure, heterodimer of alpha and beta chains; disulfide-linked. Part of the B-cell antigen receptor complex where the alpha/beta chain heterodimer is non-covalently associated with an antigen-specific membrane-bound surface immunoglobulin of two heavy chains and two light chains. Interacts with LYN. Phosphorylated on tyrosine upon B-cell activation by SRC-type Tyr-kinases such as BLK, LYN and SYK. As to expression, B-cells.

Its subcellular location is the cell membrane. In terms of biological role, required in cooperation with CD79A for initiation of the signal transduction cascade activated by the B-cell antigen receptor complex (BCR) which leads to internalization of the complex, trafficking to late endosomes and antigen presentation. Enhances phosphorylation of CD79A, possibly by recruiting kinases which phosphorylate CD79A or by recruiting proteins which bind to CD79A and protect it from dephosphorylation. In Homo sapiens (Human), this protein is B-cell antigen receptor complex-associated protein beta chain (CD79B).